Consider the following 1451-residue polypeptide: ARF guanine-nucleotide exchange factor GNOM (1451 aa).

The interval 1 to 246 (MGRLKLHSGI…VNRAGSIKQE (246 aa)) is DCB domain. The SEC7 domain maps to 557 to 752 (RRKYIKRRLM…NEIRTTPEQG (196 aa)). The active site involves Glu-658. Residues 1430 to 1451 (SQLGDDETVSNGLSSPENTTGS) form a disordered region.

Homodimer. Interacts with CYP19-4/CYP5 in vitro. In terms of tissue distribution, stems, leaves, flowers, siliques, floral inflorescence and roots. Expressed in the whole plant (at the protein level).

The protein resides in the cytoplasm. It is found in the cytosol. The protein localises to the endosome membrane. It localises to the cell membrane. With respect to regulation, inhibited by brefeldin A (BFA). Its function is as follows. Activates the ARF proteins by exchanging bound GDP for free GTP. Plays a role in vesicular protein sorting. Acts as the major regulator of endosomal vesicle trafficking but is also involved in the endocytosis process. Could function redundantly with GNL1 in the retrograde Golgi to endoplasmic reticulum trafficking. Regulates vesicle trafficking required for the coordinated polar localization of auxin efflux carriers which in turn determines the direction of auxin flow. Mediates the sorting of PIN1 from endosomal compartments to the basal plasma membrane and the polarization of PIN3 to the bottom side of hypocotyl endodermal cells. Involved in the specification of apical-basal pattern formation in the early embryo and during root formation. Required for correct cell wall organization leading to normal cell adhesion during seedling development. Also plays an essential role in hydrotropism of seedling roots. This Arabidopsis thaliana (Mouse-ear cress) protein is ARF guanine-nucleotide exchange factor GNOM (GN).